Consider the following 89-residue polypeptide: MSITAERKAEVIKTSATKAGDTGSPEVQVAILSERITNLTAHFKTHTKDNHSRRGLLKLVSTRRSLLDYIKKKDEARYKALLEKHNIRR.

Basic and acidic residues predominate over residues 1 to 11; it reads MSITAERKAEV. Positions 1-24 are disordered; it reads MSITAERKAEVIKTSATKAGDTGS.

It belongs to the universal ribosomal protein uS15 family. Part of the 30S ribosomal subunit. Forms a bridge to the 50S subunit in the 70S ribosome, contacting the 23S rRNA.

In terms of biological role, one of the primary rRNA binding proteins, it binds directly to 16S rRNA where it helps nucleate assembly of the platform of the 30S subunit by binding and bridging several RNA helices of the 16S rRNA. Forms an intersubunit bridge (bridge B4) with the 23S rRNA of the 50S subunit in the ribosome. This Rhodopseudomonas palustris (strain TIE-1) protein is Small ribosomal subunit protein uS15.